Consider the following 325-residue polypeptide: Small ribosomal subunit protein RACK1 (325 aa).

7 WD repeats span residues alanine 13–histidine 44, glycine 61–aspartate 91, glycine 103–asparagine 133, alanine 147–asparagine 179, glycine 191–aspartate 221, aspartate 232–aspartate 261, and lysine 291–glycine 321.

It belongs to the WD repeat G protein beta family. Ribosomal protein RACK1 subfamily.

Functionally, plays a role in hormone-mediated cell division. This chain is Small ribosomal subunit protein RACK1 (GB1), found in Medicago sativa (Alfalfa).